The chain runs to 220 residues: UPF0319 protein YccT (220 aa).

Positions 1-20 (MKTGALTTFLALCLPVTVFA) are cleaved as a signal peptide.

This sequence belongs to the UPF0319 family.

In Salmonella dublin (strain CT_02021853), this protein is UPF0319 protein YccT.